A 178-amino-acid polypeptide reads, in one-letter code: Bifunctional protein PyrR (178 aa).

The PRPP-binding signature appears at 99–111 (VILVDDVLFTGRT).

It belongs to the purine/pyrimidine phosphoribosyltransferase family. PyrR subfamily. As to quaternary structure, homodimer and homohexamer; in equilibrium.

The catalysed reaction is UMP + diphosphate = 5-phospho-alpha-D-ribose 1-diphosphate + uracil. Its function is as follows. Regulates transcriptional attenuation of the pyrimidine nucleotide (pyr) operon by binding in a uridine-dependent manner to specific sites on pyr mRNA. This disrupts an antiterminator hairpin in the RNA and favors formation of a downstream transcription terminator, leading to a reduced expression of downstream genes. In terms of biological role, also displays a weak uracil phosphoribosyltransferase activity which is not physiologically significant. In Limosilactobacillus reuteri subsp. reuteri (strain JCM 1112) (Lactobacillus reuteri), this protein is Bifunctional protein PyrR.